The primary structure comprises 347 residues: Probable dual-specificity RNA methyltransferase RlmN (347 aa).

E90 acts as the Proton acceptor in catalysis. The region spanning 96 to 326 is the Radical SAM core domain; it reads YKHGNSICIS…VTVRREMGSD (231 aa). A disulfide bridge links C103 with C331. [4Fe-4S] cluster is bound by residues C110, C114, and C117. S-adenosyl-L-methionine-binding positions include 157–158, S189, 212–214, and N288; these read GE and SLH. Catalysis depends on C331, which acts as the S-methylcysteine intermediate.

The protein belongs to the radical SAM superfamily. RlmN family. [4Fe-4S] cluster serves as cofactor.

Its subcellular location is the cytoplasm. It catalyses the reaction adenosine(2503) in 23S rRNA + 2 reduced [2Fe-2S]-[ferredoxin] + 2 S-adenosyl-L-methionine = 2-methyladenosine(2503) in 23S rRNA + 5'-deoxyadenosine + L-methionine + 2 oxidized [2Fe-2S]-[ferredoxin] + S-adenosyl-L-homocysteine. The enzyme catalyses adenosine(37) in tRNA + 2 reduced [2Fe-2S]-[ferredoxin] + 2 S-adenosyl-L-methionine = 2-methyladenosine(37) in tRNA + 5'-deoxyadenosine + L-methionine + 2 oxidized [2Fe-2S]-[ferredoxin] + S-adenosyl-L-homocysteine. Its function is as follows. Specifically methylates position 2 of adenine 2503 in 23S rRNA and position 2 of adenine 37 in tRNAs. The protein is Probable dual-specificity RNA methyltransferase RlmN of Clostridium botulinum (strain Eklund 17B / Type B).